Here is a 428-residue protein sequence, read N- to C-terminus: Adenylosuccinate synthetase (428 aa).

GTP is bound by residues 12-18 (GDEGKGK) and 40-42 (GHT). The active-site Proton acceptor is the aspartate 13. Positions 13 and 40 each coordinate Mg(2+). IMP is bound by residues 13 to 16 (DEGK), 38 to 41 (NAGH), threonine 128, arginine 142, glutamine 223, threonine 238, and arginine 302. Histidine 41 functions as the Proton donor in the catalytic mechanism. 298 to 304 (VTTGRPR) is a binding site for substrate. Residues arginine 304, 330 to 332 (KLD), and 413 to 415 (GVG) each bind GTP.

The protein belongs to the adenylosuccinate synthetase family. Homodimer. Mg(2+) serves as cofactor.

The protein localises to the cytoplasm. The catalysed reaction is IMP + L-aspartate + GTP = N(6)-(1,2-dicarboxyethyl)-AMP + GDP + phosphate + 2 H(+). It functions in the pathway purine metabolism; AMP biosynthesis via de novo pathway; AMP from IMP: step 1/2. Plays an important role in the de novo pathway of purine nucleotide biosynthesis. Catalyzes the first committed step in the biosynthesis of AMP from IMP. The polypeptide is Adenylosuccinate synthetase (Acidothermus cellulolyticus (strain ATCC 43068 / DSM 8971 / 11B)).